The primary structure comprises 259 residues: tRNA (guanine-N(7)-)-methyltransferase (259 aa).

Residues 1-36 (MTFPSHNPPETGHPSAAPDEALPAAEAPVPGDPEAR) are disordered. Residues 14 to 29 (PSAAPDEALPAAEAPV) show a composition bias toward low complexity. Residues glutamate 91, glutamate 116, aspartate 143, and aspartate 166 each contribute to the S-adenosyl-L-methionine site. Residue aspartate 166 is part of the active site. Substrate is bound by residues lysine 170, aspartate 202, and 237–240 (TKFE).

Belongs to the class I-like SAM-binding methyltransferase superfamily. TrmB family.

It catalyses the reaction guanosine(46) in tRNA + S-adenosyl-L-methionine = N(7)-methylguanosine(46) in tRNA + S-adenosyl-L-homocysteine. It participates in tRNA modification; N(7)-methylguanine-tRNA biosynthesis. Functionally, catalyzes the formation of N(7)-methylguanine at position 46 (m7G46) in tRNA. The polypeptide is tRNA (guanine-N(7)-)-methyltransferase (Aromatoleum aromaticum (strain DSM 19018 / LMG 30748 / EbN1) (Azoarcus sp. (strain EbN1))).